A 286-amino-acid chain; its full sequence is Shikimate dehydrogenase (NADP(+)) (286 aa).

Residues 19-21 and T66 contribute to the shikimate site; that span reads SVS. K70 functions as the Proton acceptor in the catalytic mechanism. Shikimate contacts are provided by N91 and D106. NADP(+)-binding positions include 130–134 and A225; that span reads GAGGS. Residue Y227 coordinates shikimate. G248 is a binding site for NADP(+).

Belongs to the shikimate dehydrogenase family. As to quaternary structure, homodimer.

The enzyme catalyses shikimate + NADP(+) = 3-dehydroshikimate + NADPH + H(+). Its pathway is metabolic intermediate biosynthesis; chorismate biosynthesis; chorismate from D-erythrose 4-phosphate and phosphoenolpyruvate: step 4/7. Its function is as follows. Involved in the biosynthesis of the chorismate, which leads to the biosynthesis of aromatic amino acids. Catalyzes the reversible NADPH linked reduction of 3-dehydroshikimate (DHSA) to yield shikimate (SA). This chain is Shikimate dehydrogenase (NADP(+)), found in Dehalococcoides mccartyi (strain ATCC BAA-2266 / KCTC 15142 / 195) (Dehalococcoides ethenogenes (strain 195)).